A 249-amino-acid polypeptide reads, in one-letter code: Putative type I specificity subunit S.MpnORF615P (249 aa).

Belongs to the type-I restriction system S methylase family. In terms of assembly, the methyltransferase is composed of M and S polypeptides.

Its function is as follows. The specificity (S) subunit of a type I methyltransferase (MTase); this subunit dictates DNA sequence specificity. The single R subunit has multiple frameshifts and is probably not expressed. This is Putative type I specificity subunit S.MpnORF615P from Mycoplasma pneumoniae (strain ATCC 29342 / M129 / Subtype 1) (Mycoplasmoides pneumoniae).